A 40-amino-acid polypeptide reads, in one-letter code: Photosystem II reaction center protein J (40 aa).

The helical transmembrane segment at 8 to 28 (IPLWLIGTVTGIPVIGSIGIF) threads the bilayer.

This sequence belongs to the PsbJ family. In terms of assembly, PSII is composed of 1 copy each of membrane proteins PsbA, PsbB, PsbC, PsbD, PsbE, PsbF, PsbH, PsbI, PsbJ, PsbK, PsbL, PsbM, PsbT, PsbX, PsbY, PsbZ, Psb30/Ycf12, at least 3 peripheral proteins of the oxygen-evolving complex and a large number of cofactors. It forms dimeric complexes.

It localises to the plastid. It is found in the chloroplast thylakoid membrane. One of the components of the core complex of photosystem II (PSII). PSII is a light-driven water:plastoquinone oxidoreductase that uses light energy to abstract electrons from H(2)O, generating O(2) and a proton gradient subsequently used for ATP formation. It consists of a core antenna complex that captures photons, and an electron transfer chain that converts photonic excitation into a charge separation. This chain is Photosystem II reaction center protein J, found in Chloranthus spicatus (Chulantree).